Here is a 307-residue protein sequence, read N- to C-terminus: DNA damage tolerance protein rad31 (307 aa).

Functionally, could be involved in a ubiquitin-related process important for DNA damage tolerance. Acts in a process which is defective in the checkpoint rad mutants and which involves hus5. This is DNA damage tolerance protein rad31 (rad31) from Schizosaccharomyces pombe (strain 972 / ATCC 24843) (Fission yeast).